A 989-amino-acid chain; its full sequence is Envelope glycoprotein gp160 (989 aa).

The N-terminal stretch at 1–106 (MTSKESKPSR…CLMWEMRKGN (106 aa)) is a signal peptide. The Extracellular portion of the chain corresponds to 107 to 838 (QCQAEEVIAL…WSSWFSWLKY (732 aa)). Residues asparagine 140, asparagine 161, asparagine 206, asparagine 258, asparagine 298, asparagine 364, asparagine 381, asparagine 387, asparagine 403, asparagine 435, asparagine 439, asparagine 470, asparagine 475, asparagine 481, asparagine 491, asparagine 501, asparagine 515, asparagine 527, asparagine 537, asparagine 542, asparagine 543, asparagine 551, and asparagine 568 are each glycosylated (N-linked (GlcNAc...) asparagine; by host). The fusion peptide stretch occupies residues 663–683 (GIGLVIVLAIMAIIAAAGAGL). The stretch at 695–745 (RTAVQSLANATAAQQEVLEASYAMVQHIAKGIRILEARVARVEALVDRMMV) forms a coiled coil. N-linked (GlcNAc...) asparagine; by host glycosylation is present at asparagine 703. The tract at residues 729 to 745 (LEARVARVEALVDRMMV) is immunosuppression. N-linked (GlcNAc...) asparagine; by host glycans are attached at residues asparagine 771, asparagine 778, asparagine 794, and asparagine 828. Positions 786-821 (EEIEQHEGNLSLLLREAALQVHIAQRDARRIPDAWK) form a coiled coil. The helical transmembrane segment at 839–859 (IPWIIMGIVGLICFRILMCVI) threads the bilayer. At 860 to 989 (SMCLQAYKQV…PTLENDYVEL (130 aa)) the chain is on the cytoplasmic side. Cysteine 862 is lipidated: S-palmitoyl cysteine; by host.

In terms of assembly, the mature envelope protein (Env) consists of a trimer of SU-TM heterodimers attached by noncovalent interactions or by a labile interchain disulfide bond. In terms of processing, specific enzymatic cleavages in vivo yield mature proteins. Envelope glycoproteins are synthesized as an inactive precursor that is N-glycosylated and processed likely by host cell furin or by a furin-like protease in the Golgi to yield the mature SU and TM proteins. The cleavage site between SU and TM requires the minimal sequence [KR]-X-[KR]-R. The transmembrane protein is palmitoylated.

The protein resides in the virion membrane. Its subcellular location is the host cell membrane. In terms of biological role, the surface protein (SU) attaches the virus to the host cell by binding to its receptor. This interaction triggers the refolding of the transmembrane protein (TM) and is thought to activate its fusogenic potential by unmasking its fusion peptide. Fusion occurs at the host cell plasma membrane. Functionally, the transmembrane protein (TM) acts as a class I viral fusion protein. Under the current model, the protein has at least 3 conformational states: pre-fusion native state, pre-hairpin intermediate state, and post-fusion hairpin state. During viral and target cell membrane fusion, the coiled coil regions (heptad repeats) assume a trimer-of-hairpins structure, positioning the fusion peptide in close proximity to the C-terminal region of the ectodomain. The formation of this structure appears to drive apposition and subsequent fusion of viral and target cell membranes. Membranes fusion leads to delivery of the nucleocapsid into the cytoplasm. This Ovis aries (Sheep) protein is Envelope glycoprotein gp160 (env).